The following is a 1043-amino-acid chain: Probable inorganic carbon transporter subunit DabA (1043 aa).

Zn(2+) is bound by residues Cys-460, Asp-462, His-719, and Cys-734.

The protein belongs to the inorganic carbon transporter (TC 9.A.2) DabA family. Forms a complex with DabB. It depends on Zn(2+) as a cofactor.

The protein resides in the cell inner membrane. Part of an energy-coupled inorganic carbon pump. The sequence is that of Probable inorganic carbon transporter subunit DabA from Thiobacillus denitrificans (strain ATCC 25259 / T1).